A 273-amino-acid polypeptide reads, in one-letter code: Formamidopyrimidine-DNA glycosylase (273 aa).

Pro-2 acts as the Schiff-base intermediate with DNA in catalysis. The Proton donor role is filled by Glu-3. Lys-59 serves as the catalytic Proton donor; for beta-elimination activity. Positions 92 and 111 each coordinate DNA. The FPG-type zinc finger occupies 239–273 (KVYGKTDEPCVVCGKPIEKIKLNGRGTHFCPNCQK). Arg-263 serves as the catalytic Proton donor; for delta-elimination activity.

This sequence belongs to the FPG family. In terms of assembly, monomer. The cofactor is Zn(2+).

The enzyme catalyses Hydrolysis of DNA containing ring-opened 7-methylguanine residues, releasing 2,6-diamino-4-hydroxy-5-(N-methyl)formamidopyrimidine.. It carries out the reaction 2'-deoxyribonucleotide-(2'-deoxyribose 5'-phosphate)-2'-deoxyribonucleotide-DNA = a 3'-end 2'-deoxyribonucleotide-(2,3-dehydro-2,3-deoxyribose 5'-phosphate)-DNA + a 5'-end 5'-phospho-2'-deoxyribonucleoside-DNA + H(+). Involved in base excision repair of DNA damaged by oxidation or by mutagenic agents. Acts as a DNA glycosylase that recognizes and removes damaged bases. Has a preference for oxidized purines, such as 7,8-dihydro-8-oxoguanine (8-oxoG). Has AP (apurinic/apyrimidinic) lyase activity and introduces nicks in the DNA strand. Cleaves the DNA backbone by beta-delta elimination to generate a single-strand break at the site of the removed base with both 3'- and 5'-phosphates. The chain is Formamidopyrimidine-DNA glycosylase from Listeria monocytogenes serotype 4b (strain F2365).